Here is a 573-residue protein sequence, read N- to C-terminus: ATP-dependent RNA helicase RhlB (573 aa).

A Q motif motif is present at residues 9–37; it reads LTFSSFDLHPALVAGLESAGFTRCTPIQA. The 181-residue stretch at 40-220 folds into the Helicase ATP-binding domain; sequence LPVALPGGDV…YEHMNEPEKL (181 aa). ATP is bound at residue 53-60; it reads AQTGTGKT. The DEAD box motif lies at 166–169; the sequence is DEAD. The region spanning 231–393 is the Helicase C-terminal domain; sequence RVRQRIYFPS…PVTTELLTPL (163 aa). The span at 391–400 shows a compositional bias: low complexity; the sequence is TPLPRTPRAT. The segment at 391 to 559 is disordered; the sequence is TPLPRTPRAT…AKPSGSPSLL (169 aa). The span at 402–411 shows a compositional bias: acidic residues; the sequence is EGEEVDDDAG. Over residues 419–432 the composition is skewed to basic and acidic residues; it reads REAREQRAADEARR. Residues 435–449 show a composition bias toward gly residues; sequence GRSGPGGASRSGSGG. Residues 450–461 show a composition bias toward basic and acidic residues; it reads GRRDGAGADGKP. Over residues 476–499 the composition is skewed to low complexity; sequence PAAAPSETPVVVAAAAETPAVTAA. The segment covering 505-514 has biased composition (basic residues); that stretch reads PRKRRRRRNG. Composition is skewed to low complexity over residues 516 to 528 and 541 to 559; these read PVEGAEPVVASTP and VVAKPVRAAAKPSGSPSLL.

Belongs to the DEAD box helicase family. RhlB subfamily. In terms of assembly, component of the RNA degradosome, which is a multiprotein complex involved in RNA processing and mRNA degradation.

The protein resides in the cytoplasm. The catalysed reaction is ATP + H2O = ADP + phosphate + H(+). In terms of biological role, DEAD-box RNA helicase involved in RNA degradation. Has RNA-dependent ATPase activity and unwinds double-stranded RNA. The chain is ATP-dependent RNA helicase RhlB from Xanthomonas campestris pv. campestris (strain B100).